Reading from the N-terminus, the 434-residue chain is Histidine--tRNA ligase (434 aa).

Positions 412-434 (DQTTVPVEAFPGDHDAPTYEDVV) are disordered.

The protein belongs to the class-II aminoacyl-tRNA synthetase family.

The protein localises to the cytoplasm. The enzyme catalyses tRNA(His) + L-histidine + ATP = L-histidyl-tRNA(His) + AMP + diphosphate + H(+). The polypeptide is Histidine--tRNA ligase (Haloquadratum walsbyi (strain DSM 16790 / HBSQ001)).